Consider the following 884-residue polypeptide: Probable mixed-linked glucan synthase 9 (884 aa).

The segment covering 1–27 has biased composition (low complexity); the sequence is MALSPAAAGRTGRNNNNDAGLADPLLP. A disordered region spans residues 1–34; that stretch reads MALSPAAAGRTGRNNNNDAGLADPLLPAGGGGGG. The next 2 membrane-spanning stretches (helical) occupy residues 73-93 and 104-124; these read VLLH…VLFL and AMWL…TWLL. The active site involves D195. The substrate site is built by D396 and D398. D565 is an active-site residue. The next 6 helical transmembrane spans lie at 640–660, 672–692, 708–728, 765–785, 802–822, and 830–850; these read TAYP…VIWL, FSTY…IGLV, EQFY…HIVL, LLAP…AAAG, AGLV…LGIM, and CALF…FVAV.

The protein belongs to the glycosyltransferase 2 family. Plant cellulose synthase-like F subfamily.

It localises to the golgi apparatus membrane. Its function is as follows. May catalyze both beta-1,3 and beta-1,4 glycosidic linkage on beta-D-glucan. Essential for (1,3;1,4)-beta-D-glucans synthesis in grasses and cereals (Poaceae). The mixed-linked glucans (which are not present in walls of dicotyledons or most other monocotyledonous plants) are particularly important constituents of the walls of the starchy endosperm and aleurone cells of cereal grains such as oats, wheat, rice and barley. They can account for up to 70% by weight of the wall. This chain is Probable mixed-linked glucan synthase 9 (CSLF9), found in Oryza sativa subsp. japonica (Rice).